The chain runs to 436 residues: 3-ketoacyl-CoA thiolase (436 aa).

The active-site Acyl-thioester intermediate is the cysteine 99. Residues histidine 392 and cysteine 422 each act as proton acceptor in the active site.

It belongs to the thiolase-like superfamily. Thiolase family. Heterotetramer of two alpha chains (FadJ) and two beta chains (FadI).

The protein localises to the cytoplasm. The enzyme catalyses an acyl-CoA + acetyl-CoA = a 3-oxoacyl-CoA + CoA. The protein operates within lipid metabolism; fatty acid beta-oxidation. Functionally, catalyzes the final step of fatty acid oxidation in which acetyl-CoA is released and the CoA ester of a fatty acid two carbons shorter is formed. The polypeptide is 3-ketoacyl-CoA thiolase (Shigella boydii serotype 18 (strain CDC 3083-94 / BS512)).